The chain runs to 125 residues: Small ribosomal subunit protein uS12 (125 aa).

At Asp89 the chain carries 3-methylthioaspartic acid. A disordered region spans residues 105–125 (QGVKDRKQSRSKYGAKKPKAK). Positions 113-125 (SRSKYGAKKPKAK) are enriched in basic residues.

This sequence belongs to the universal ribosomal protein uS12 family. In terms of assembly, part of the 30S ribosomal subunit. Contacts proteins S8 and S17. May interact with IF1 in the 30S initiation complex.

Functionally, with S4 and S5 plays an important role in translational accuracy. Its function is as follows. Interacts with and stabilizes bases of the 16S rRNA that are involved in tRNA selection in the A site and with the mRNA backbone. Located at the interface of the 30S and 50S subunits, it traverses the body of the 30S subunit contacting proteins on the other side and probably holding the rRNA structure together. The combined cluster of proteins S8, S12 and S17 appears to hold together the shoulder and platform of the 30S subunit. The polypeptide is Small ribosomal subunit protein uS12 (Delftia acidovorans (strain DSM 14801 / SPH-1)).